Here is a 208-residue protein sequence, read N- to C-terminus: Large ribosomal subunit protein uL3 (208 aa).

Residues 123 to 147 (RHGQSRGPMAHGSRYHRRPGSMGPV) form a disordered region.

It belongs to the universal ribosomal protein uL3 family. As to quaternary structure, part of the 50S ribosomal subunit. Forms a cluster with proteins L14 and L19.

One of the primary rRNA binding proteins, it binds directly near the 3'-end of the 23S rRNA, where it nucleates assembly of the 50S subunit. The sequence is that of Large ribosomal subunit protein uL3 from Streptococcus gordonii (strain Challis / ATCC 35105 / BCRC 15272 / CH1 / DL1 / V288).